The sequence spans 430 residues: MKETIDFLIDTVEARQVLDSRGNPTVEAEVFLECGASGRAIVPSGASTGAHEAHELRDGGSKYMGKGVLNAVNKIHETISPALCGLSSLDQTAVDKLMIEIDGTPNKSNLGANSILAVSLATARASANALDIPLYRYLGDPLSNLLPVPLMNVINGGAHAPNSLDFQEFMLVPHGVNNFSESLRMGTEIFHSLKSLLDQKGLSTAVGDEGGFAPNLSSSVEAGDLLLEAIQKAGFKPGEQVSLALDAASTEFYRDGIYKYEGKSLNSSEMISYLSRLVSNYPIVSIEDGLAEDDWEGWSELNKELGNKVQLVGDDLFVTNTERLRKGIIEKSANSILIKVNQIGTLTETLEAIELAKMSGFTSVISHRSGETEDTTIADLSVATRSGQIKTGSLSRSERIAKYNRLLKIEEELGNQARFAGALGLGPKNI.

Position 167 (Gln-167) interacts with (2R)-2-phosphoglycerate. The Proton donor role is filled by Glu-209. Positions 246, 287, and 314 each coordinate Mg(2+). Positions 339, 368, 369, and 390 each coordinate (2R)-2-phosphoglycerate. The Proton acceptor role is filled by Lys-339.

The protein belongs to the enolase family. Mg(2+) is required as a cofactor.

Its subcellular location is the cytoplasm. The protein localises to the secreted. The protein resides in the cell surface. It catalyses the reaction (2R)-2-phosphoglycerate = phosphoenolpyruvate + H2O. It functions in the pathway carbohydrate degradation; glycolysis; pyruvate from D-glyceraldehyde 3-phosphate: step 4/5. Catalyzes the reversible conversion of 2-phosphoglycerate (2-PG) into phosphoenolpyruvate (PEP). It is essential for the degradation of carbohydrates via glycolysis. This chain is Enolase, found in Prochlorococcus marinus (strain AS9601).